We begin with the raw amino-acid sequence, 328 residues long: Ketol-acid reductoisomerase (NADP(+)) (328 aa).

In terms of domain architecture, KARI N-terminal Rossmann spans Met1–Thr179. NADP(+)-binding positions include Tyr24–Gln27, Arg47, and Ser51. His106 is an active-site residue. Gly132 lines the NADP(+) pocket. One can recognise a KARI C-terminal knotted domain in the interval Thr180–Ala325. Residues Asp188, Glu192, Glu224, and Glu228 each contribute to the Mg(2+) site. Ser249 lines the substrate pocket.

This sequence belongs to the ketol-acid reductoisomerase family. Mg(2+) serves as cofactor.

It carries out the reaction (2R)-2,3-dihydroxy-3-methylbutanoate + NADP(+) = (2S)-2-acetolactate + NADPH + H(+). The catalysed reaction is (2R,3R)-2,3-dihydroxy-3-methylpentanoate + NADP(+) = (S)-2-ethyl-2-hydroxy-3-oxobutanoate + NADPH + H(+). It participates in amino-acid biosynthesis; L-isoleucine biosynthesis; L-isoleucine from 2-oxobutanoate: step 2/4. Its pathway is amino-acid biosynthesis; L-valine biosynthesis; L-valine from pyruvate: step 2/4. In terms of biological role, involved in the biosynthesis of branched-chain amino acids (BCAA). Catalyzes an alkyl-migration followed by a ketol-acid reduction of (S)-2-acetolactate (S2AL) to yield (R)-2,3-dihydroxy-isovalerate. In the isomerase reaction, S2AL is rearranged via a Mg-dependent methyl migration to produce 3-hydroxy-3-methyl-2-ketobutyrate (HMKB). In the reductase reaction, this 2-ketoacid undergoes a metal-dependent reduction by NADPH to yield (R)-2,3-dihydroxy-isovalerate. The chain is Ketol-acid reductoisomerase (NADP(+)) from Tremblaya princeps.